Reading from the N-terminus, the 312-residue chain is Terpene synthase 8 (312 aa).

The DDxx(x)D/E motif signature appears at 96–101; it reads DDYIYE. The NDxxSxxxD/E motif signature appears at 224-232; that stretch reads NDCGSFKME.

This sequence belongs to the terpene synthase family.

The enzyme catalyses (2E,6E)-farnesyl diphosphate + H2O = discoidol + diphosphate. It functions in the pathway sesquiterpene biosynthesis. Functionally, terpene synthase; part of the gene cluster that mediates the biosynthesis of the trisnorsesquiterpene discodiene which has a function during later stages of multicellular development, during the transition from fingers to Mexican hats. The terpene synthase tps8 converts its substrate farnesyl diphosphate (FDP) into the bicyclic sesquiterpene alcohol discoidol. The cytochrome P450 monooxygenase cyp521A1 then catalyzes the oxidative degradation of discoidol to form the trisnorsesquiterpene discodiene. In Dictyostelium discoideum (Social amoeba), this protein is Terpene synthase 8.